The following is a 187-amino-acid chain: Pre-mRNA-splicing factor cwf7 (187 aa).

It belongs to the SPF27 family. As to quaternary structure, belongs to the 40S cdc5-associated complex (or cwf complex), a spliceosome sub-complex reminiscent of a late-stage spliceosome composed of the U2, U5 and U6 snRNAs and at least brr2, cdc5, cwf2/prp3, cwf3/syf1, cwf4/syf3, cwf5/ecm2, spp42/cwf6, cwf7/spf27, cwf8, cwf9, cwf10, cwf11, cwf12, prp45/cwf13, cwf14, cwf15, cwf16, cwf17, cwf18, cwf19, cwf20, cwf21, cwf22, cwf23, cwf24, cwf25, cwf26, cyp7/cwf27, cwf28, cwf29/ist3, lea1, msl1, prp5/cwf1, prp10, prp12/sap130, prp17, prp22, sap61, sap62, sap114, sap145, slu7, smb1, smd1, smd3, smf1, smg1 and syf2.

It is found in the nucleus. Its function is as follows. Involved in mRNA splicing. The polypeptide is Pre-mRNA-splicing factor cwf7 (cwf7) (Schizosaccharomyces pombe (strain 972 / ATCC 24843) (Fission yeast)).